The primary structure comprises 352 residues: Alanine racemase (352 aa).

The active-site Proton acceptor; specific for D-alanine is the Lys33. Lys33 carries the N6-(pyridoxal phosphate)lysine modification. Arg129 lines the substrate pocket. Tyr250 functions as the Proton acceptor; specific for L-alanine in the catalytic mechanism. Residue Met298 participates in substrate binding.

It belongs to the alanine racemase family. The cofactor is pyridoxal 5'-phosphate.

It catalyses the reaction L-alanine = D-alanine. The protein operates within amino-acid biosynthesis; D-alanine biosynthesis; D-alanine from L-alanine: step 1/1. Its function is as follows. Catalyzes the interconversion of L-alanine and D-alanine. May also act on other amino acids. The chain is Alanine racemase (alr) from Neisseria meningitidis serogroup A / serotype 4A (strain DSM 15465 / Z2491).